Here is a 527-residue protein sequence, read N- to C-terminus: EGF domain-specific O-linked N-acetylglucosamine transferase (527 aa).

The N-terminal stretch at 1–19 is a signal peptide; it reads MLMLLVFGVLLHEVPLSGQ. A Required for optimal activity motif is present at residues 295–297; that stretch reads DYD. N354 is a glycosylation site (N-linked (GlcNAc...) asparagine). Residues 524 to 527 carry the Prevents secretion from ER motif; that stretch reads HDEL.

The protein belongs to the glycosyltransferase 61 family.

It is found in the endoplasmic reticulum lumen. The catalysed reaction is L-seryl-[protein] + UDP-N-acetyl-alpha-D-glucosamine = 3-O-(N-acetyl-beta-D-glucosaminyl)-L-seryl-[protein] + UDP + H(+). It carries out the reaction L-threonyl-[protein] + UDP-N-acetyl-alpha-D-glucosamine = 3-O-(N-acetyl-beta-D-glucosaminyl)-L-threonyl-[protein] + UDP + H(+). Its function is as follows. Catalyzes the transfer of a single N-acetylglucosamine from UDP-GlcNAc to a serine or threonine residue in extracellular proteins resulting in their modification with a beta-linked N-acetylglucosamine (O-GlcNAc). Specifically glycosylates the Thr residue located between the fifth and sixth conserved cysteines of folded EGF-like domains. In Rattus norvegicus (Rat), this protein is EGF domain-specific O-linked N-acetylglucosamine transferase (Eogt).